Reading from the N-terminus, the 86-residue chain is Bacteriocin thailandicin (86 aa).

Residues 23–86 constitute a cross-link (cyclopeptide (Leu-Trp)); the sequence is LTANLGISSY…KYGAKYSAAW (64 aa).

It localises to the secreted. Functionally, cyclopeptide antibiotic with bacteriolytic activity against the Gram-positive bacteria S.aureus and S.thermophilus, and lower activity against the Gram-negative bacteria E.coli and P.aeruginosa. The polypeptide is Bacteriocin thailandicin (Enterococcus thailandicus).